The sequence spans 315 residues: Homoserine kinase (315 aa).

Residue 97–107 coordinates ATP; sequence PPARGLGSSAT.

Belongs to the GHMP kinase family. Homoserine kinase subfamily.

The protein localises to the cytoplasm. It carries out the reaction L-homoserine + ATP = O-phospho-L-homoserine + ADP + H(+). It participates in amino-acid biosynthesis; L-threonine biosynthesis; L-threonine from L-aspartate: step 4/5. Functionally, catalyzes the ATP-dependent phosphorylation of L-homoserine to L-homoserine phosphate. The sequence is that of Homoserine kinase from Prochlorococcus marinus (strain NATL2A).